Reading from the N-terminus, the 294-residue chain is Homeobox-leucine zipper protein ATHB-13 (294 aa).

The segment at residues 82–141 is a DNA-binding region (homeobox); it reads MGEKKRRLNMEQVKTLEKNFELGNKLEPERKMQLARALGLQPRQIAIWFQNRRARWKTKQ. Residues 142–177 form a leucine-zipper region; the sequence is LEKDYDTLKRQFDTLKAENDLLQTHNQKLQAEIMGL. A disordered region spans residues 181–246; sequence EQTESINLNK…FFPPSPATAT (66 aa). Residues 197–210 show a composition bias toward low complexity; that stretch reads SNRSDNSSDNLRLD. Over residues 214 to 223 the composition is skewed to polar residues; sequence APPSNDSTLT.

The protein belongs to the HD-ZIP homeobox family. Class I subfamily. As to expression, predominantly expressed in leaves and flowers.

The protein resides in the nucleus. Its function is as follows. Probable transcription factor that may act in the sucrose-signaling pathway. This Arabidopsis thaliana (Mouse-ear cress) protein is Homeobox-leucine zipper protein ATHB-13 (ATHB-13).